A 335-amino-acid chain; its full sequence is Beta-ketoacyl-[acyl-carrier-protein] synthase III (335 aa).

Residues Cys119 and His261 contribute to the active site. An ACP-binding region spans residues 262-266 (QANQR). The active site involves Asn291.

It belongs to the thiolase-like superfamily. FabH family. Homodimer.

Its subcellular location is the cytoplasm. It catalyses the reaction malonyl-[ACP] + acetyl-CoA + H(+) = 3-oxobutanoyl-[ACP] + CO2 + CoA. It participates in lipid metabolism; fatty acid biosynthesis. In terms of biological role, catalyzes the condensation reaction of fatty acid synthesis by the addition to an acyl acceptor of two carbons from malonyl-ACP. Catalyzes the first condensation reaction which initiates fatty acid synthesis and may therefore play a role in governing the total rate of fatty acid production. Possesses both acetoacetyl-ACP synthase and acetyl transacylase activities. Its substrate specificity determines the biosynthesis of branched-chain and/or straight-chain of fatty acids. The polypeptide is Beta-ketoacyl-[acyl-carrier-protein] synthase III (Prochlorococcus marinus subsp. pastoris (strain CCMP1986 / NIES-2087 / MED4)).